Here is a 31-residue protein sequence, read N- to C-terminus: Cytochrome b6-f complex subunit 6 (31 aa).

Residues Ile3–Phe23 form a helical membrane-spanning segment.

This sequence belongs to the PetL family. The 4 large subunits of the cytochrome b6-f complex are cytochrome b6, subunit IV (17 kDa polypeptide, PetD), cytochrome f and the Rieske protein, while the 4 small subunits are PetG, PetL, PetM and PetN. The complex functions as a dimer.

The protein localises to the plastid. It is found in the chloroplast thylakoid membrane. In terms of biological role, component of the cytochrome b6-f complex, which mediates electron transfer between photosystem II (PSII) and photosystem I (PSI), cyclic electron flow around PSI, and state transitions. PetL is important for photoautotrophic growth as well as for electron transfer efficiency and stability of the cytochrome b6-f complex. The polypeptide is Cytochrome b6-f complex subunit 6 (Gnetum parvifolium (Small-leaved jointfir)).